Consider the following 173-residue polypeptide: dCTP deaminase, dUMP-forming (173 aa).

Residues 93 to 98 (RSSTGR), Asp111, 119 to 121 (TLE), Gln138, and Tyr151 each bind dCTP. Glu121 (proton donor/acceptor) is an active-site residue.

It belongs to the dCTP deaminase family. As to quaternary structure, homotrimer.

The enzyme catalyses dCTP + 2 H2O = dUMP + NH4(+) + diphosphate. Its pathway is pyrimidine metabolism; dUMP biosynthesis; dUMP from dCTP: step 1/1. Functionally, bifunctional enzyme that catalyzes both the deamination of dCTP to dUTP and the hydrolysis of dUTP to dUMP without releasing the toxic dUTP intermediate. This Clostridium botulinum (strain Eklund 17B / Type B) protein is dCTP deaminase, dUMP-forming.